A 452-amino-acid chain; its full sequence is Probable multidrug resistance protein NorM (452 aa).

Helical transmembrane passes span 12–34, 49–71, 91–113, 128–150, 162–184, 194–216, 245–267, 282–304, 317–339, 359–381, 388–410, and 415–437; these read RQFLTILIPILITQAGLSLITVL, GVAIGSSLWTPVYTGLAGILTAV, VIQSIYVAGIISLAVIVSGYFLI, VIAKQYLICIGLGILPLFVYNVM, VTMLITLCSLPINFVLNYLFIFG, AGAGLASAITYWCICLISLYIVH, GIPIGFAIFFETSIFAAVTLLMS, NFASLLYMLPLSVSMTLTIVVGF, YSYLGISIAVGFSLFTALIILLF, DFLLYALFFQLSDAIAAPIQGAL, NYTLVTALVSYWIIGLPVGFVIG, and FGAFGYWIGLITGLAAGAVGLFF.

This sequence belongs to the multi antimicrobial extrusion (MATE) (TC 2.A.66.1) family.

It localises to the cell membrane. Its function is as follows. Multidrug efflux pump. The protein is Probable multidrug resistance protein NorM (norM) of Bacillus licheniformis (strain ATCC 14580 / DSM 13 / JCM 2505 / CCUG 7422 / NBRC 12200 / NCIMB 9375 / NCTC 10341 / NRRL NRS-1264 / Gibson 46).